The primary structure comprises 572 residues: E3 SUMO-protein ligase PIAS2 (572 aa).

The SAP domain maps to 11 to 45 (VSSFRVSELQVLLGFAGRNKSGRKHDLLMRALHLL). The LXXLL motif signature appears at 19–23 (LQVLL). Residues K46 and K249 each participate in a glycyl lysine isopeptide (Lys-Gly) (interchain with G-Cter in SUMO2) cross-link. A PINIT domain is found at 134-299 (QPSPPIPPVH…SMSVYLVRQL (166 aa)). An SP-RING-type zinc finger spans residues 331-412 (PDSEIATTSL…FMEILNDCSD (82 aa)). Zn(2+)-binding residues include C362, H364, C385, and C388. Residues K430, K435, K443, and K452 each participate in a glycyl lysine isopeptide (Lys-Gly) (interchain with G-Cter in SUMO2) cross-link. Positions 467-473 (IDVIDLT) are SUMO1-binding. Phosphoserine is present on residues S476, S477, and S478. Residues 484–492 (PPAKRKCIF) carry the Nuclear localization signal motif. K489 participates in a covalent cross-link: Glycyl lysine isopeptide (Lys-Gly) (interchain with G-Cter in SUMO2). S499 carries the phosphoserine modification. Residue K502 forms a Glycyl lysine isopeptide (Lys-Gly) (interchain with G-Cter in SUMO2) linkage. Residues 523–572 (AAIPPSLTDYSVPFHHTPVSSMSSDLPGEQRRNDINNEVQLGTSSDTVQQ) form a disordered region. The segment covering 558-572 (NNEVQLGTSSDTVQQ) has biased composition (polar residues).

The protein belongs to the PIAS family. Binds SUMO1 and UBE2I. Interacts with AXIN1, JUN, MDM2, PARK7, TP53 and TP73 isoform alpha, but not TP73 isoform beta. Interacts with STAT4 following IL12 and IFN-alpha stimulation of T-cells. Interacts also with GTF2I, GTF2IRD1, IKFZ1, DAB2 and MSX2, as well as with several steroid receptors, including ESR1, ESR2, NR3C1, PGR, AR, and with NCOA2. Sumoylation of a target protein seems to enhance the interaction. Binds to sumoylated ELK1. Binds DNA, such as CDKN1A promoter, in a sequence-specific manner. Interacts with PLAG1. Interacts with KLF8; the interaction results in SUMO ligation and repression of KLF8 transcriptional activity and of its cell cycle progression into G(1) phase. Interacts with IFIH1/MDA5. Interacts with PML. Interacts with PRDM1. Sumoylated. In terms of tissue distribution, mainly expressed in testis.

It localises to the nucleus speckle. It is found in the nucleus. Its subcellular location is the PML body. It functions in the pathway protein modification; protein sumoylation. In terms of biological role, functions as an E3-type small ubiquitin-like modifier (SUMO) ligase, stabilizing the interaction between UBE2I and the substrate, and as a SUMO-tethering factor. Plays a crucial role as a transcriptional coregulation in various cellular pathways, including the STAT pathway, the p53 pathway and the steroid hormone signaling pathway. The effects of this transcriptional coregulation, transactivation or silencing may vary depending upon the biological context and PIAS2 isoform studied. However, it seems to be mostly involved in gene silencing. Binds to sumoylated ELK1 and enhances its transcriptional activity by preventing recruitment of HDAC2 by ELK1, thus reversing SUMO-mediated repression of ELK1 transactivation activity. Sumoylates PML at'Lys-65' and 'Lys-160'. The polypeptide is E3 SUMO-protein ligase PIAS2 (Pias2) (Rattus norvegicus (Rat)).